A 188-amino-acid polypeptide reads, in one-letter code: Acireductone dioxygenase (188 aa).

Positions 97, 99, 103, and 141 each coordinate Fe(2+). Histidine 97, histidine 99, glutamate 103, and histidine 141 together coordinate Ni(2+).

This sequence belongs to the acireductone dioxygenase (ARD) family. In terms of assembly, monomer. It depends on Fe(2+) as a cofactor. Requires Ni(2+) as cofactor.

It carries out the reaction 1,2-dihydroxy-5-(methylsulfanyl)pent-1-en-3-one + O2 = 3-(methylsulfanyl)propanoate + CO + formate + 2 H(+). The catalysed reaction is 1,2-dihydroxy-5-(methylsulfanyl)pent-1-en-3-one + O2 = 4-methylsulfanyl-2-oxobutanoate + formate + 2 H(+). Its pathway is amino-acid biosynthesis; L-methionine biosynthesis via salvage pathway; L-methionine from S-methyl-5-thio-alpha-D-ribose 1-phosphate: step 5/6. Its function is as follows. Catalyzes 2 different reactions between oxygen and the acireductone 1,2-dihydroxy-3-keto-5-methylthiopentene (DHK-MTPene) depending upon the metal bound in the active site. Fe-containing acireductone dioxygenase (Fe-ARD) produces formate and 2-keto-4-methylthiobutyrate (KMTB), the alpha-ketoacid precursor of methionine in the methionine recycle pathway. Ni-containing acireductone dioxygenase (Ni-ARD) produces methylthiopropionate, carbon monoxide and formate, and does not lie on the methionine recycle pathway. In Xylella fastidiosa (strain 9a5c), this protein is Acireductone dioxygenase.